Here is a 476-residue protein sequence, read N- to C-terminus: Probable flippase AglR (476 aa).

14 helical membrane-spanning segments follow: residues 7–29 (ASAL…TIYV), 34–56 (GVGA…IPAV), 83–103 (VLTG…SPFV), 112–132 (TQLV…LGGL), 146–166 (ALWG…GVGV), 168–188 (ALFY…VYSL), 222–242 (WLDT…IYEV), 246–266 (ISAL…PTIS), 287–307 (VAGV…GDIL), 310–330 (YGPS…LSVV), 354–373 (FRIG…SLIP), 377–396 (VIGA…ILAV), 409–429 (VSAI…LFTI), and 439–459 (IEVV…LLSL).

This sequence belongs to the AglR/Agl15 family.

The protein resides in the cell membrane. It participates in cell surface structure biogenesis; S-layer biogenesis. In terms of biological role, involved in the assembly of a N-linked pentasaccharide that decorates the S-layer glycoprotein and flagellins. Probably mediates or contributes to the translocation of the dolichol-phosphate-mannose across the membrane. The polypeptide is Probable flippase AglR (aglR) (Haloferax volcanii (strain ATCC 29605 / DSM 3757 / JCM 8879 / NBRC 14742 / NCIMB 2012 / VKM B-1768 / DS2) (Halobacterium volcanii)).